We begin with the raw amino-acid sequence, 419 residues long: Histidine--tRNA ligase (419 aa).

Belongs to the class-II aminoacyl-tRNA synthetase family. Homodimer.

The protein resides in the cytoplasm. It catalyses the reaction tRNA(His) + L-histidine + ATP = L-histidyl-tRNA(His) + AMP + diphosphate + H(+). The polypeptide is Histidine--tRNA ligase (Thermosipho melanesiensis (strain DSM 12029 / CIP 104789 / BI429)).